A 59-amino-acid chain; its full sequence is Arabinogalactan protein 13 (59 aa).

Positions 1-27 are cleaved as a signal peptide; sequence MEAMKMRLFVAVLVAAMAFSAVQQAAA. P31, P33, and P35 each carry 4-hydroxyproline. P31, P33, and P35 each carry an O-linked (Ara...) hydroxyproline glycan. S37 carries the GPI-anchor amidated serine lipid modification. A propeptide spans 38–59 (removed in mature form); it reads DASLAIPAFFASVATLAFGFLF.

This sequence belongs to the AG-peptide AGP family. In terms of processing, contains 4-hydroxyproline; hydroxylated on Pro-31, Pro-33 and Pro-35. Post-translationally, O-glycosylated on hydroxyprolines; noncontiguous hydroxylproline residues are glycosylated with arabinogalactan.

Its subcellular location is the cell membrane. In terms of biological role, proteoglycan that seems to be implicated in diverse developmental roles such as differentiation, cell-cell recognition, embryogenesis and programmed cell death. The sequence is that of Arabinogalactan protein 13 from Arabidopsis thaliana (Mouse-ear cress).